The sequence spans 308 residues: Probable GTP 3',8-cyclase (308 aa).

A Radical SAM core domain is found at 4 to 224 (RFGRPLEDLR…QIRKKHFRPR (221 aa)). Arg-13 is a GTP binding site. [4Fe-4S] cluster-binding residues include Cys-20, Cys-24, and Cys-27. Residue Lys-60 coordinates GTP. Residue Gly-64 coordinates S-adenosyl-L-methionine. Thr-90 contributes to the GTP binding site. Ser-114 is a binding site for S-adenosyl-L-methionine. Position 151 (Lys-151) interacts with GTP. Cys-245 and Cys-248 together coordinate [4Fe-4S] cluster. 250–252 (RIR) is a binding site for GTP. Cys-262 contacts [4Fe-4S] cluster.

It belongs to the radical SAM superfamily. MoaA family. [4Fe-4S] cluster serves as cofactor.

It carries out the reaction GTP + AH2 + S-adenosyl-L-methionine = (8S)-3',8-cyclo-7,8-dihydroguanosine 5'-triphosphate + 5'-deoxyadenosine + L-methionine + A + H(+). Its pathway is cofactor biosynthesis; molybdopterin biosynthesis. In terms of biological role, catalyzes the cyclization of GTP to (8S)-3',8-cyclo-7,8-dihydroguanosine 5'-triphosphate. This Saccharolobus islandicus (strain Y.N.15.51 / Yellowstone #2) (Sulfolobus islandicus) protein is Probable GTP 3',8-cyclase.